The sequence spans 410 residues: Multifunctional CCA protein (410 aa).

ATP-binding residues include G8 and R11. Residues G8 and R11 each contribute to the CTP site. Mg(2+) contacts are provided by D21 and D23. ATP is bound by residues R91, R137, and R140. Residues R91, R137, and R140 each contribute to the CTP site. Residues 228–329 form the HD domain; that stretch reads TGVHVLSVLQ…LELLQSFDVY (102 aa).

This sequence belongs to the tRNA nucleotidyltransferase/poly(A) polymerase family. Bacterial CCA-adding enzyme type 1 subfamily. Monomer. Can also form homodimers and oligomers. Mg(2+) serves as cofactor. Ni(2+) is required as a cofactor.

It catalyses the reaction a tRNA precursor + 2 CTP + ATP = a tRNA with a 3' CCA end + 3 diphosphate. The catalysed reaction is a tRNA with a 3' CCA end + 2 CTP + ATP = a tRNA with a 3' CCACCA end + 3 diphosphate. Catalyzes the addition and repair of the essential 3'-terminal CCA sequence in tRNAs without using a nucleic acid template. Adds these three nucleotides in the order of C, C, and A to the tRNA nucleotide-73, using CTP and ATP as substrates and producing inorganic pyrophosphate. tRNA 3'-terminal CCA addition is required both for tRNA processing and repair. Also involved in tRNA surveillance by mediating tandem CCA addition to generate a CCACCA at the 3' terminus of unstable tRNAs. While stable tRNAs receive only 3'-terminal CCA, unstable tRNAs are marked with CCACCA and rapidly degraded. This Pseudomonas paraeruginosa (strain DSM 24068 / PA7) (Pseudomonas aeruginosa (strain PA7)) protein is Multifunctional CCA protein.